Reading from the N-terminus, the 428-residue chain is Cyclin-B1-1 (428 aa).

It belongs to the cyclin family. Cyclin AB subfamily. In terms of assembly, interacts with FZR2/CCS52A1, FZR1/CCS52A2 and FZR3/CCS52B. Expressed in root tip, lateral root apex, shoot apex, leaf primordia, axillary buds, stamen and petal primordia, ovules and developing embryo.

It localises to the nucleus. The protein is Cyclin-B1-1 (CYCB1-1) of Arabidopsis thaliana (Mouse-ear cress).